The following is a 691-amino-acid chain: Two-component response regulator ORR21 (691 aa).

A Response regulatory domain is found at 17–132 (KVLVVDDDPT…ELKNIWQHVI (116 aa)). D68 carries the post-translational modification 4-aspartylphosphate. Residues 139-155 (NKEHEHSGSLDDTDRTR) are compositionally biased toward basic and acidic residues. Residues 139–204 (NKEHEHSGSL…DPSSTSKKPR (66 aa)) form a disordered region. Residues 199–258 (TSKKPRVVWSVELHQQFVNAVNHLGIDKAVPKKILELMNVPGLTRENVASHLQKFRLYLK) constitute a DNA-binding region (myb-like GARP).

Belongs to the ARR family. Type-B subfamily. Post-translationally, two-component system major event consists of a His-to-Asp phosphorelay between a sensor histidine kinase (HK) and a response regulator (RR). In plants, the His-to-Asp phosphorelay involves an additional intermediate named Histidine-containing phosphotransfer protein (HPt). This multistep phosphorelay consists of a His-Asp-His-Asp sequential transfer of a phosphate group between first a His and an Asp of the HK protein, followed by the transfer to a conserved His of the HPt protein and finally the transfer to an Asp in the receiver domain of the RR protein.

It is found in the nucleus. Transcriptional activator that binds specific DNA sequence. Functions as a response regulator involved in His-to-Asp phosphorelay signal transduction system. Phosphorylation of the Asp residue in the receiver domain activates the ability of the protein to promote the transcription of target genes. May directly activate some type-A response regulators in response to cytokinins. This Oryza sativa subsp. japonica (Rice) protein is Two-component response regulator ORR21.